The following is a 423-amino-acid chain: AP-1 complex subunit mu-1 (423 aa).

Residue Ser2 is modified to N-acetylserine. 3 positions are modified to phosphothreonine: Thr152, Thr154, and Thr223. Residues 168-421 (KNEVFLDVIE…ITQNGDYQLR (254 aa)) form the MHD domain.

It belongs to the adaptor complexes medium subunit family. As to quaternary structure, adaptor protein complex 1 (AP-1) is a heterotetramer composed of two large adaptins (gamma-type subunit AP1G1 and beta-type subunit AP1B1), a medium adaptin (mu-type subunit AP1M1 or AP1M2) and a small adaptin (sigma-type subunit AP1S1 or AP1S2 or AP1S3). Interacts with MARCHF11. In terms of processing, phosphorylation of membrane-bound AP1M1/AP1M2 increases its affinity for sorting signals.

It is found in the cytoplasmic vesicle. Its subcellular location is the clathrin-coated vesicle membrane. It localises to the golgi apparatus. Subunit of clathrin-associated adaptor protein complex 1 that plays a role in protein sorting in the trans-Golgi network (TGN) and endosomes. The AP complexes mediate the recruitment of clathrin to membranes and the recognition of sorting signals within the cytosolic tails of transmembrane cargo molecules. The protein is AP-1 complex subunit mu-1 of Rattus norvegicus (Rat).